The chain runs to 551 residues: Cilia- and flagella-associated protein 45 (551 aa).

3 disordered regions span residues 1–52, 232–256, and 385–415; these read MPLR…KSDS, MEID…ERVR, and EQDA…KKIE. The segment covering 8–18 has biased composition (low complexity); sequence ASSSASTASNR. Positions 276–524 form a coiled coil; that stretch reads AEHREQEKEQ…EDIKKQKLEE (249 aa). Residues 387–415 are compositionally biased toward basic and acidic residues; sequence DALRAKRNQEVADREWRRKEKENAQKKIE.

The protein belongs to the CFAP45 family. As to quaternary structure, microtubule inner protein component of sperm flagellar doublet microtubules. Interacts with AK8; dimerization with AK8 may create a cavity at the interface of the dimer that can accommodate AMP. Interacts with CFAP52. Interacts with ENKUR. Directly interacts with DNALI1. Interacts with DNAH11. Interacts with DNAI1. As to expression, expressed in respiratory cells and in sperm (at protein level).

The protein localises to the cytoplasm. Its subcellular location is the cytoskeleton. It localises to the cilium axoneme. It is found in the flagellum axoneme. The protein resides in the cell projection. The protein localises to the cilium. Its subcellular location is the flagellum. In terms of biological role, microtubule inner protein (MIP) part of the dynein-decorated doublet microtubules (DMTs) in cilia axoneme, which is required for motile cilia beating. It is an AMP-binding protein that may facilitate dynein ATPase-dependent ciliary and flagellar beating via adenine nucleotide homeostasis. May function as a donor of AMP to AK8 and hence promote ADP production. In Mus musculus (Mouse), this protein is Cilia- and flagella-associated protein 45 (Cfap45).